Reading from the N-terminus, the 767-residue chain is 5-methyltetrahydropteroyltriglutamate--homocysteine methyltransferase (767 aa).

5-methyltetrahydropteroyltri-L-glutamate-binding positions include 17–20 (RELK) and lysine 117. Residues 441–443 (IGS) and glutamate 494 each bind L-homocysteine. L-methionine-binding positions include 441–443 (IGS) and glutamate 494. 5-methyltetrahydropteroyltri-L-glutamate-binding positions include 525 to 526 (RC) and tryptophan 571. Position 609 (aspartate 609) interacts with L-homocysteine. Aspartate 609 contributes to the L-methionine binding site. Residue glutamate 615 coordinates 5-methyltetrahydropteroyltri-L-glutamate. 3 residues coordinate Zn(2+): histidine 652, cysteine 654, and glutamate 676. Histidine 705 acts as the Proton donor in catalysis. Cysteine 737 serves as a coordination point for Zn(2+).

This sequence belongs to the vitamin-B12 independent methionine synthase family. Zn(2+) serves as cofactor.

The enzyme catalyses 5-methyltetrahydropteroyltri-L-glutamate + L-homocysteine = tetrahydropteroyltri-L-glutamate + L-methionine. Its pathway is amino-acid biosynthesis; L-methionine biosynthesis via de novo pathway; L-methionine from L-homocysteine (MetE route): step 1/1. In terms of biological role, catalyzes the transfer of a methyl group from 5-methyltetrahydrofolate to homocysteine resulting in methionine formation. The chain is 5-methyltetrahydropteroyltriglutamate--homocysteine methyltransferase from Bifidobacterium longum subsp. infantis (strain ATCC 15697 / DSM 20088 / JCM 1222 / NCTC 11817 / S12).